Consider the following 95-residue polypeptide: UPF0358 protein BCE_3996 (95 aa).

This sequence belongs to the UPF0358 family.

The protein is UPF0358 protein BCE_3996 of Bacillus cereus (strain ATCC 10987 / NRS 248).